The sequence spans 465 residues: Argininosuccinate lyase (465 aa).

The protein belongs to the lyase 1 family. Argininosuccinate lyase subfamily.

Its subcellular location is the cytoplasm. The enzyme catalyses 2-(N(omega)-L-arginino)succinate = fumarate + L-arginine. It functions in the pathway amino-acid biosynthesis; L-arginine biosynthesis; L-arginine from L-ornithine and carbamoyl phosphate: step 3/3. In Rhodopseudomonas palustris (strain HaA2), this protein is Argininosuccinate lyase.